The sequence spans 143 residues: UPF0201 protein Msed_1787 (143 aa).

The protein belongs to the UPF0201 family.

The chain is UPF0201 protein Msed_1787 from Metallosphaera sedula (strain ATCC 51363 / DSM 5348 / JCM 9185 / NBRC 15509 / TH2).